The following is a 477-amino-acid chain: Homeobox protein Meis2 (477 aa).

The tract at residues D71 to E191 is required for interaction with PBX1. In terms of domain architecture, MEIS N-terminal spans G110 to D193. Positions D193–L203 are enriched in basic and acidic residues. The tract at residues D193–F283 is disordered. 2 stretches are compositionally biased toward polar residues: residues S204 to S217 and G239 to Q251. A DNA-binding region (homeobox; TALE-type) is located at residues R276–M338. The segment at L299 to R333 is interaction with DNA. The tract at residues D340–Q477 is transcriptional activation domain.

Belongs to the TALE/MEIS homeobox family. As to quaternary structure, monomer and homodimer. Heterodimer with HOXB13. Isoform 2 interacts with TLX1. Isoform 3 interacts with HOXA13 and PBX1 isoform PBX1b. Isoform 4 interacts with SP1, SP3 and KLF4. Isoform 4 and isoform 5 interact with PBX1 isoform PBX1a; the interaction partially relieves MEIS2 autoinhibition. Isoform 3 also known as MEIS2b is part of a PDX1:PBX1b:Meis2B complex; Meis2B is recruited by PBX1b and can be replaced by isoform 4 in a small fraction of complexes. Can form trimeric complexes including HOXB8 and PBX2 or PBX3. Expressed in various tissues. Expressed at high level in the lymphoid organs of hematopoietic tissues. Also expressed in some regions of the brain, such as the putamen.

The protein resides in the nucleus. It is found in the cytoplasm. It localises to the perinuclear region. In terms of biological role, involved in transcriptional regulation. Binds to HOX or PBX proteins to form dimers, or to a DNA-bound dimer of PBX and HOX proteins and thought to have a role in stabilization of the homeoprotein-DNA complex. Isoform 3 is required for the activity of a PDX1:PBX1b:MEIS2b complex in pancreatic acinar cells involved in the transcriptional activation of the ELA1 enhancer; the complex binds to the enhancer B element and cooperates with the transcription factor 1 complex (PTF1) bound to the enhancer A element; MEIS2 is not involved in complex DNA-binding. Probably in complex with PBX1, is involved in transcriptional regulation by KLF4. Isoform 3 and isoform 4 can bind to a EPHA8 promoter sequence containing the DNA motif 5'-CGGTCA-3'; in cooperation with a PBX protein (such as PBX2) is proposed to be involved in the transcriptional activation of EPHA8 in the developing midbrain. May be involved in regulation of myeloid differentiation. Can bind to the DNA sequence 5'-TGACAG-3'in the activator ACT sequence of the D(1A) dopamine receptor (DRD1) promoter and activate DRD1 transcription; isoform 5 cannot activate DRD1 transcription. This chain is Homeobox protein Meis2 (MEIS2), found in Homo sapiens (Human).